The sequence spans 337 residues: Holliday junction branch migration complex subunit RuvB (337 aa).

The tract at residues 4–184 is large ATPase domain (RuvB-L); the sequence is ADRLIEPIAS…FGIVQRLEFY (181 aa). Residues isoleucine 23, arginine 24, glycine 65, lysine 68, threonine 69, threonine 70, 131–133, arginine 174, tyrosine 184, and arginine 221 contribute to the ATP site; that span reads EDY. A Mg(2+)-binding site is contributed by threonine 69. Residues 185-255 form a small ATPAse domain (RuvB-S) region; sequence NVADLSTIVS…TAAAALDMLE (71 aa). Residues 258–337 form a head domain (RuvB-H) region; it reads SEGFDIMDRK…FGITKDQTKD (80 aa). The DNA site is built by arginine 294, arginine 313, and arginine 318.

It belongs to the RuvB family. As to quaternary structure, homohexamer. Forms an RuvA(8)-RuvB(12)-Holliday junction (HJ) complex. HJ DNA is sandwiched between 2 RuvA tetramers; dsDNA enters through RuvA and exits via RuvB. An RuvB hexamer assembles on each DNA strand where it exits the tetramer. Each RuvB hexamer is contacted by two RuvA subunits (via domain III) on 2 adjacent RuvB subunits; this complex drives branch migration. In the full resolvosome a probable DNA-RuvA(4)-RuvB(12)-RuvC(2) complex forms which resolves the HJ.

It localises to the cytoplasm. It carries out the reaction ATP + H2O = ADP + phosphate + H(+). Functionally, the RuvA-RuvB-RuvC complex processes Holliday junction (HJ) DNA during genetic recombination and DNA repair, while the RuvA-RuvB complex plays an important role in the rescue of blocked DNA replication forks via replication fork reversal (RFR). RuvA specifically binds to HJ cruciform DNA, conferring on it an open structure. The RuvB hexamer acts as an ATP-dependent pump, pulling dsDNA into and through the RuvAB complex. RuvB forms 2 homohexamers on either side of HJ DNA bound by 1 or 2 RuvA tetramers; 4 subunits per hexamer contact DNA at a time. Coordinated motions by a converter formed by DNA-disengaged RuvB subunits stimulates ATP hydrolysis and nucleotide exchange. Immobilization of the converter enables RuvB to convert the ATP-contained energy into a lever motion, pulling 2 nucleotides of DNA out of the RuvA tetramer per ATP hydrolyzed, thus driving DNA branch migration. The RuvB motors rotate together with the DNA substrate, which together with the progressing nucleotide cycle form the mechanistic basis for DNA recombination by continuous HJ branch migration. Branch migration allows RuvC to scan DNA until it finds its consensus sequence, where it cleaves and resolves cruciform DNA. In Colwellia psychrerythraea (strain 34H / ATCC BAA-681) (Vibrio psychroerythus), this protein is Holliday junction branch migration complex subunit RuvB.